The primary structure comprises 219 residues: Pyridoxal 5'-phosphate synthase subunit PDX2 (219 aa).

52 to 54 (GES) provides a ligand contact to L-glutamine. Cys-87 acts as the Nucleophile in catalysis. L-glutamine-binding positions include Arg-121 and 153-154 (IR). Active-site charge relay system residues include His-196 and Glu-198.

The protein belongs to the glutaminase PdxT/SNO family. In the presence of Pdx1, forms a dodecamer of heterodimers. Only shows activity in the heterodimer.

The protein localises to the cytoplasm. The catalysed reaction is aldehydo-D-ribose 5-phosphate + D-glyceraldehyde 3-phosphate + L-glutamine = pyridoxal 5'-phosphate + L-glutamate + phosphate + 3 H2O + H(+). The enzyme catalyses L-glutamine + H2O = L-glutamate + NH4(+). It functions in the pathway cofactor biosynthesis; pyridoxal 5'-phosphate biosynthesis. Its function is as follows. Catalyzes the hydrolysis of glutamine to glutamate and ammonia as part of the biosynthesis of pyridoxal 5'-phosphate. The resulting ammonia molecule is channeled to the active site of Pdx1. The polypeptide is Pyridoxal 5'-phosphate synthase subunit PDX2 (Plasmodium falciparum (isolate 3D7)).